Consider the following 1746-residue polypeptide: Non-reducing polyketide synthase ptaA (1746 aa).

An N-terminal acylcarrier protein transacylase domain (SAT) region spans residues 4-227; it reads NSGSGTSPWG…ALPVYGGLCH (224 aa). One can recognise a Ketosynthase family 3 (KS3) domain in the interval 361-796; the sequence is QSKIAIVGMS…GGNTTIAIEE (436 aa). Catalysis depends on for beta-ketoacyl synthase activity residues C534, H670, and H714. Residues 898–1218 form a malonyl-CoA:ACP transacylase (MAT) domain region; sequence FAFTGQGASY…LGALHLAGIP (321 aa). The segment at 1286–1605 is product template (PT) domain; the sequence is TSTVHRVIGE…RLLLDRFFSA (320 aa). The tract at residues 1290–1425 is N-terminal hotdog fold; it reads HRVIGETFDG…ATLFYGKAND (136 aa). In terms of domain architecture, PKS/mFAS DH spans 1290–1600; it reads HRVIGETFDG…FRRYPRLLLD (311 aa). The active-site Proton acceptor; for dehydratase activity is the H1322. Residues 1452-1600 are C-terminal hotdog fold; sequence VANRFSRNMA…FRRYPRLLLD (149 aa). Residue D1511 is the Proton donor; for dehydratase activity of the active site. The Carrier domain occupies 1671–1745; that stretch reads DSITVKAMAL…DLRAWLLEYY (75 aa). An O-(pantetheine 4'-phosphoryl)serine modification is found at S1705.

The enzyme catalyses holo-[ACP] + 8 malonyl-CoA + 8 H(+) = atrochrysone carboxyl-[ACP] + 8 CO2 + 8 CoA + 2 H2O. The protein operates within secondary metabolite biosynthesis. In terms of biological role, non-reducing polyketide synthase; part of the gene cluster that mediates the biosynthesis of pestheic acid, a diphenyl ether which is a biosynthetic precursor of the unique chloropupukeananes. The biosynthesis initiates from condensation of acetate and malonate units catalyzed by the non-reducing PKS ptaA. As the ptaA protein is TE/CLC domain-deficient, hydrolysis and Claisen cyclization of the polyketide could be catalyzed by ptaB containing a beta-lactamase domain. The ptaB protein might hydrolyze the thioester bond between the ACP of ptaA and the intermediate to release atrochrysone carboxylic acid, which is spontaneously dehydrated to form endocrocin anthrone. Endocrocin anthrone is then converted to endocrocin, catalyzed by the anthrone oxygenase ptaC. Spontaneous decarboxylation of endocrocin occurs to generate emodin. An O-methyltransferase (ptaH or ptaI) could methylate emodin to form physcion. PtaJ could then catalyze the oxidative cleavage of physcion, and rotation of the intermediate could then afford desmethylisosulochrin. PtaF, a putative NADH-dependent oxidoreductase, might also participate in the oxidative cleavage step. Desmethylisosulochrin is then transformed by another O-methyltransferase (ptaH or ptaI) to form isosulochrin. Chlorination of isosulochrin by ptaM in the cyclohexadienone B ring then produces chloroisosulochrin. PtaE is responsible for the oxidative coupling reactions of both benzophenones isosulochrin and chloroisosulochrin to RES-1214-1 and pestheic acid respectively, regardless of chlorination. The polypeptide is Non-reducing polyketide synthase ptaA (Pestalotiopsis fici (strain W106-1 / CGMCC3.15140)).